Here is a 691-residue protein sequence, read N- to C-terminus: Elongation factor G (691 aa).

The tr-type G domain maps to 12-286 (KKLRNIGIMA…GVLEYLPSPL (275 aa)). GTP contacts are provided by residues 21–28 (AHIDAGKT), 85–89 (DTPGH), and 139–142 (NKMD).

This sequence belongs to the TRAFAC class translation factor GTPase superfamily. Classic translation factor GTPase family. EF-G/EF-2 subfamily.

Its subcellular location is the cytoplasm. Catalyzes the GTP-dependent ribosomal translocation step during translation elongation. During this step, the ribosome changes from the pre-translocational (PRE) to the post-translocational (POST) state as the newly formed A-site-bound peptidyl-tRNA and P-site-bound deacylated tRNA move to the P and E sites, respectively. Catalyzes the coordinated movement of the two tRNA molecules, the mRNA and conformational changes in the ribosome. The polypeptide is Elongation factor G (Thermosipho melanesiensis (strain DSM 12029 / CIP 104789 / BI429)).